We begin with the raw amino-acid sequence, 1336 residues long: Immunoglobulin superfamily member 1 (1336 aa).

The signal sequence occupies residues 1–28 (MTLDRPGEGATMLKTFTVLLFCIRMSLG). Residues 29 to 518 (MTSIVMDPQP…GYLTWNYVLN (490 aa)) lie on the Extracellular side of the membrane. 5 Ig-like C2-type domains span residues 38–122 (PELW…KVLE), 137–222 (QAET…LVVA), 226–312 (PKPT…SDVL), 321–408 (PKTW…PSHN), and 419–500 (PKPS…HRSE). Asparagine 53 carries an N-linked (GlcNAc...) asparagine glycan. A disulfide bridge links cysteine 58 with cysteine 106. A disulfide bridge links cysteine 248 with cysteine 296. Residues asparagine 338, asparagine 374, and asparagine 381 are each glycosylated (N-linked (GlcNAc...) asparagine). Intrachain disulfides connect cysteine 343–cysteine 392 and cysteine 441–cysteine 484. The chain crosses the membrane as a helical span at residues 519–539 (EAIRLSLIMQLVALLLVVLWI). Over 540-559 (RWKCRRLRIREAWLLGTAQG) the chain is Cytoplasmic. A helical membrane pass occupies residues 560–580 (VTMLFIVTALLCCGLCNGVLI). At 581–1336 (EETEIVMPTP…RISVELPVPI (756 aa)) the chain is on the extracellular side. 7 consecutive Ig-like C2-type domains span residues 589–677 (TPKP…ALEL), 686–760 (PVIS…RPFK), 777–869 (PKPF…LVVT), 873–958 (PKPT…YLSM), 965–1060 (TDTF…ELLV), 1065–1150 (PKPS…NHSD), and 1161–1242 (PKPS…EPSD). Asparagine 607, asparagine 747, asparagine 798, asparagine 846, asparagine 939, asparagine 986, asparagine 1027, and asparagine 1082 each carry an N-linked (GlcNAc...) asparagine glycan. Cysteine 703 and cysteine 750 form a disulfide bridge. Cystine bridges form between cysteine 799–cysteine 849 and cysteine 895–cysteine 942. Cysteines 1087 and 1134 form a disulfide. N-linked (GlcNAc...) asparagine glycosylation is found at asparagine 1147 and asparagine 1223. An intrachain disulfide couples cysteine 1183 to cysteine 1226. A disordered region spans residues 1308–1336 (CNQEGEPGTPANSPSSTSQRISVELPVPI). Over residues 1317–1328 (PANSPSSTSQRI) the composition is skewed to polar residues.

As to quaternary structure, interacts with INHA. In PubMed:12385827 does not interact with INHA; standard receptor binding assay. Interacts with ACVR1B; the interaction appears to be ligand-dependent as it is diminished by inhibin B and activin A. Interacts with ACVR2A, ACVR2B, ACVRL1 and BMPR1B. Interacts with HECTD1. Highly expressed in pancreas, testis and fetal liver. Moderately expressed in heart, prostate and small intestine. Expressed at very low levels in brain, thymus, ovary, colon, fetal lung and fetal kidney. Expressed in muscle. Isoform 3 is expressed in pituitary gland.

The protein localises to the membrane. It is found in the secreted. Its function is as follows. Seems to be a coreceptor in inhibin signaling, but seems not to be a high-affinity inhibin receptor. Antagonizes activin A signaling in the presence or absence of inhibin B. Necessary to mediate a specific antagonistic effect of inhibin B on activin-stimulated transcription. The polypeptide is Immunoglobulin superfamily member 1 (IGSF1) (Homo sapiens (Human)).